A 209-amino-acid chain; its full sequence is Immunoglobulin lambda-like polypeptide 1 (209 aa).

The first 30 residues, 1–30 (MKLRVGQTLGTIPRQCEVLLLLLLLGLVDG), serve as a signal peptide directing secretion. Positions 93–104 (VFGGGTQLTILG) are j region. A c region region spans residues 105–209 (QPKSDPLVTL…EKSVSPAECS (105 aa)). An Ig-like C1-type domain is found at 110-204 (PLVTLFLPSL…EGNTVEKSVS (95 aa)). An intrachain disulfide couples cysteine 131 to cysteine 190.

In terms of assembly, interacts with VPREB1A. Interacts with SYNV1/HRD1 (via N-terminus); this interaction leads to increased IGLL1 ubiquitination and degradation in pre-B cells, possibly through a lysosomal, not proteasomal, pathway. Selectively expressed in pre-B lymphocytes.

The protein localises to the endoplasmic reticulum. It is found in the secreted. Critical for B-cell development. This is Immunoglobulin lambda-like polypeptide 1 (Igll1) from Mus musculus (Mouse).